We begin with the raw amino-acid sequence, 474 residues long: MTDEIPFDKPIRDIASYVHNYTIPSSPTSFKHARGVILDSLGCAIETLHRSSEACTLLGPVIPGTTFPYGFHLPGTSYVLDPVKGTFDLGVLIRYLDHNDAFGGAEWGHPSDTLSAIIAVMDWLCRAEQRSSTTSIRYPPLTIKTLLEAAIKAYEIQGCYQLQNAFNAYGIDHVILVKLAAASVCSWLMGMTETQTISGANTTSRKGWAAADAAMRAVHLCLLTHAGQLGSKQPLNDKRYGFLVHTFGLEAGFALPRAFGDWAIQNIFTKLMPCEGHGISAVEAALVQGRKLKSCGHTVSDIKHIDLRVTAAANLIISKIGRLYNAADRDHCIQYVIALAFLKGRFPDAEDYMDDSPYANSKEMDDLREKIMMKVDQDLTQGYLDPERKSCGTGMTVYLNNGTVLDEVLVEYPAGHLKNPRTKELHQRKFEKNMRLAFTDAEIANIVKCIEDDEMPISSFVDLFTRDSKGMAKL.

This sequence belongs to the PrpD family. Monomer.

It carries out the reaction (4E,11E)-2-hydroxytrideca-4,11-dien-1,2,3-tricarboxylate + 2 H(+) = [4-(deca-1,8-diyl)-2,5-dioxo-2,5-dihydro-3-furanyl]acetate + 2 H2O. It participates in secondary metabolite biosynthesis. Functionally, alkylcitrate dehydratasee; part of the gene cluster that mediates the biosynthesis of the antihypercholesterolemic agents phomoidrides which are dimeric anhydrides. Within the pathway, the alkylcitrate synthase (ACS) tstiJ and the alkylcitrate dehydratase (ACDH) tstI produce the decarboxylated monomeric anhydrides by coupling the C12-fatty acyl product from phiA with oxalacetic acid. The pathway begins with the highly reducing polyketide synthase tstA that catalyzes the formation of a C12-fatty acyl-ACP, starting from one acetate and 5 malonate units. The hydrolase tstM is involved in the release of the C12-fatty acyl chain from phiA. The alkylcitrate synthase (ACS) tstJ and the alkylcitrate dehydratase (ACDH) tstI then give rise to decarboxylated monomeric anhydrides by coupling the C12-fatty acyl chain with oxalacetic acid. The cyclase tstC is responsible for the dimerization of the monomeric anhydrides which leads to the production of prephomoidride that contains the characteristic bicyclo[4.3.1]deca-1,6-diene system of phomoidrides. Iterative oxidation catalyzed by the alpha-ketoglutarate-dependent dioxygenase tstK produced then phomoidride A. Finally, the methyltransferase tstE converts phomoidride A to phomoidride B via an acetalization reaction. The phosphatidylethanolamine-binding protein tstB and tstN are not essential for dimerization and their functions have still to be determined. The protein is Alkylcitrate dehydratase phiI of Talaromyces stipitatus (strain ATCC 10500 / CBS 375.48 / QM 6759 / NRRL 1006) (Penicillium stipitatum).